The primary structure comprises 233 residues: Biosynthetic peptidoglycan transglycosylase (233 aa).

The chain crosses the membrane as a helical span at residues 8-28 (LIALPVGIFIFFNAYVYGNII).

The protein belongs to the glycosyltransferase 51 family.

It localises to the cell inner membrane. The enzyme catalyses [GlcNAc-(1-&gt;4)-Mur2Ac(oyl-L-Ala-gamma-D-Glu-L-Lys-D-Ala-D-Ala)](n)-di-trans,octa-cis-undecaprenyl diphosphate + beta-D-GlcNAc-(1-&gt;4)-Mur2Ac(oyl-L-Ala-gamma-D-Glu-L-Lys-D-Ala-D-Ala)-di-trans,octa-cis-undecaprenyl diphosphate = [GlcNAc-(1-&gt;4)-Mur2Ac(oyl-L-Ala-gamma-D-Glu-L-Lys-D-Ala-D-Ala)](n+1)-di-trans,octa-cis-undecaprenyl diphosphate + di-trans,octa-cis-undecaprenyl diphosphate + H(+). The protein operates within cell wall biogenesis; peptidoglycan biosynthesis. In terms of biological role, peptidoglycan polymerase that catalyzes glycan chain elongation from lipid-linked precursors. In Neisseria gonorrhoeae (strain ATCC 700825 / FA 1090), this protein is Biosynthetic peptidoglycan transglycosylase.